The sequence spans 876 residues: uncharacterized protein (876 aa).

Residues 37–48 (DEDKSNNDDRRS) show a composition bias toward basic and acidic residues. 4 disordered regions span residues 37–67 (DEDK…KGSN), 112–155 (DESG…RNIK), 226–254 (KKKS…TKSQ), and 330–353 (MMMD…SRSI). Residues S48 and S51 each carry the phosphoserine modification. Positions 49–58 (LASILDSSSS) are enriched in low complexity. Positions 115–131 (GFTSDNNADYFSGNSYS) are enriched in polar residues. Residues S360, S510, S552, and S577 each carry the phosphoserine modification. Residues 490-513 (PEVTKQKNTSGPKPGFSHSKSADA) form a disordered region. Disordered regions lie at residues 661–728 (ITGG…RSPQ) and 750–876 (RHSL…FGRL). Over residues 689-699 (SKSKSRSSSKS) the composition is skewed to basic residues. A compositionally biased stretch (low complexity) spans 717 to 726 (SSASASRSRS). S775 is modified (phosphoserine). Low complexity-rich tracts occupy residues 794 to 808 (NKDS…SSSL) and 842 to 854 (FSFF…SPSS).

This is an uncharacterized protein from Saccharomyces cerevisiae (strain ATCC 204508 / S288c) (Baker's yeast).